The sequence spans 364 residues: Guanine nucleotide-binding protein alpha-8 subunit (364 aa).

A lipid anchor (N-myristoyl glycine) is attached at G2. C5 is lipidated: S-palmitoyl cysteine. A G-alpha domain is found at 38–364; it reads KILKLLILGP…QHTMQKVGIQ (327 aa). The interval 41–54 is G1 motif; sequence KLLILGPGESGKST. Residues 46–53, 186–192, 211–215, 280–283, and A336 contribute to the GTP site; these read GPGESGKS, LKSRVPT, DVGGQ, and NKID. S53 and T192 together coordinate Mg(2+). The G2 motif stretch occupies residues 184 to 192; it reads DILKSRVPT. Positions 207–216 are G3 motif; it reads FRIFDVGGQR. The G4 motif stretch occupies residues 276-283; it reads ILFLNKID. The tract at residues 334-339 is G5 motif; it reads TCATDT.

It belongs to the G-alpha family. In terms of assembly, g proteins are composed of 3 units; alpha, beta and gamma. The alpha chain contains the guanine nucleotide binding site.

In terms of biological role, guanine nucleotide-binding proteins (G proteins) are involved as modulators or transducers in various transmembrane signaling systems. The protein is Guanine nucleotide-binding protein alpha-8 subunit (gpa-8) of Caenorhabditis elegans.